The chain runs to 294 residues: Type 4 apparatus protein DotZ (294 aa).

As to quaternary structure, the T4BSS is a complex nanomachine composed of several subcomplexes. This subunit is part of the Type IV Coupling Complex (T4CC), a subcomplex composed of the DotLMNYZ core and the IcmSW-LvgA adapter subunits, linked by the C-terminal tail of DotL. Six DotLMNYZ hetero-pentameric units may assemble into a hexameric nanomachine, forming an inner membrane channel for effectors to pass through. Makes significant contact with DotN and DotY, but engages weakly with DotM and DotL. DotY and DotZ are co-dependent for the assembly into the T4CC.

Its subcellular location is the cytoplasm. Functionally, component of the Dot/Icm type IVB secretion system (T4BSS), which is used to inject bacterial effector proteins into eukaryotic host cells. Part of a subcomplex which recruits effector proteins and delivers them to the core transmembrane subcomplex. DotY and DotZ play a role in effector translocation, but are not essential and do not influence the stability of the subcomplex main components. The DotY/DotZ main function is to optimize secretion by modulating the delivery trajectory of the IcmSW module and the localization of the machinery to the poles. The chain is Type 4 apparatus protein DotZ from Legionella pneumophila subsp. pneumophila (strain Philadelphia 1 / ATCC 33152 / DSM 7513).